The sequence spans 84 residues: Cell division topological specificity factor (84 aa).

It belongs to the MinE family.

In terms of biological role, prevents the cell division inhibition by proteins MinC and MinD at internal division sites while permitting inhibition at polar sites. This ensures cell division at the proper site by restricting the formation of a division septum at the midpoint of the long axis of the cell. This is Cell division topological specificity factor from Pseudomonas fluorescens (strain Pf0-1).